Consider the following 287-residue polypeptide: MHSKPPWLRAKAPTGEIFNETLNTVKLHGLHTVCEEAACPNIGECWNKRHATVMILGSVCTRACAFCNVATGIPNKLDPHEPENLAKAIKKLNLKYVVITSVDRDDLPDGGASQFIKCIEEIRKITPETTVEILTPDFLNKKGAFEAIAVASPDVYNHNIEMVPRLYARIRPRARYFHSLYLLKMVKQINPKLLTKSGLMVGLGETKEEVLQVMDDLRSAEVDFITIGQYLQPTPKHAKIDRYVTPEEFEHYKYIAYSKGFLVVASSPLTRSSYHAEEDFNRLKACR.

7 residues coordinate [4Fe-4S] cluster: C34, C39, C45, C60, C64, C67, and S273. The 217-residue stretch at 46–262 (WNKRHATVMI…KYIAYSKGFL (217 aa)) folds into the Radical SAM core domain.

This sequence belongs to the radical SAM superfamily. Lipoyl synthase family. Requires [4Fe-4S] cluster as cofactor.

Its subcellular location is the cytoplasm. It carries out the reaction [[Fe-S] cluster scaffold protein carrying a second [4Fe-4S](2+) cluster] + N(6)-octanoyl-L-lysyl-[protein] + 2 oxidized [2Fe-2S]-[ferredoxin] + 2 S-adenosyl-L-methionine + 4 H(+) = [[Fe-S] cluster scaffold protein] + N(6)-[(R)-dihydrolipoyl]-L-lysyl-[protein] + 4 Fe(3+) + 2 hydrogen sulfide + 2 5'-deoxyadenosine + 2 L-methionine + 2 reduced [2Fe-2S]-[ferredoxin]. The protein operates within protein modification; protein lipoylation via endogenous pathway; protein N(6)-(lipoyl)lysine from octanoyl-[acyl-carrier-protein]: step 2/2. Its function is as follows. Catalyzes the radical-mediated insertion of two sulfur atoms into the C-6 and C-8 positions of the octanoyl moiety bound to the lipoyl domains of lipoate-dependent enzymes, thereby converting the octanoylated domains into lipoylated derivatives. The polypeptide is Lipoyl synthase (Wolbachia sp. subsp. Brugia malayi (strain TRS)).